The following is a 141-amino-acid chain: D-aminoacyl-tRNA deacylase (141 aa).

The Gly-cisPro motif, important for rejection of L-amino acids signature appears at 133 to 134 (GP).

This sequence belongs to the DTD family. As to quaternary structure, homodimer.

It localises to the cytoplasm. The catalysed reaction is glycyl-tRNA(Ala) + H2O = tRNA(Ala) + glycine + H(+). It catalyses the reaction a D-aminoacyl-tRNA + H2O = a tRNA + a D-alpha-amino acid + H(+). An aminoacyl-tRNA editing enzyme that deacylates mischarged D-aminoacyl-tRNAs. Also deacylates mischarged glycyl-tRNA(Ala), protecting cells against glycine mischarging by AlaRS. Acts via tRNA-based rather than protein-based catalysis; rejects L-amino acids rather than detecting D-amino acids in the active site. By recycling D-aminoacyl-tRNA to D-amino acids and free tRNA molecules, this enzyme counteracts the toxicity associated with the formation of D-aminoacyl-tRNA entities in vivo and helps enforce protein L-homochirality. The sequence is that of D-aminoacyl-tRNA deacylase from Nautilia profundicola (strain ATCC BAA-1463 / DSM 18972 / AmH).